Consider the following 301-residue polypeptide: ATP synthase gamma chain (301 aa).

Belongs to the ATPase gamma chain family. As to quaternary structure, F-type ATPases have 2 components, CF(1) - the catalytic core - and CF(0) - the membrane proton channel. CF(1) has five subunits: alpha(3), beta(3), gamma(1), delta(1), epsilon(1). CF(0) has three main subunits: a, b and c.

It localises to the cell inner membrane. Its function is as follows. Produces ATP from ADP in the presence of a proton gradient across the membrane. The gamma chain is believed to be important in regulating ATPase activity and the flow of protons through the CF(0) complex. This chain is ATP synthase gamma chain, found in Helicobacter pylori (strain HPAG1).